Reading from the N-terminus, the 205-residue chain is Large ribosomal subunit protein uL4 (205 aa).

The segment at 56–78 (VSGTTAKPYRQKHTGRARQGSLR) is disordered.

Belongs to the universal ribosomal protein uL4 family. As to quaternary structure, part of the 50S ribosomal subunit.

In terms of biological role, one of the primary rRNA binding proteins, this protein initially binds near the 5'-end of the 23S rRNA. It is important during the early stages of 50S assembly. It makes multiple contacts with different domains of the 23S rRNA in the assembled 50S subunit and ribosome. Its function is as follows. Forms part of the polypeptide exit tunnel. This chain is Large ribosomal subunit protein uL4, found in Ehrlichia ruminantium (strain Gardel).